The following is a 715-amino-acid chain: Polyribonucleotide nucleotidyltransferase (715 aa).

Mg(2+) contacts are provided by aspartate 493 and aspartate 499. The region spanning 560-619 (PRMITIKINPEKIRDVIGKGGSVIRALTEETGTTIDISDDGVVTIASTNSDGMAEAKKRI) is the KH domain. Positions 629–697 (GQVYEGTVLK…EKGRVRLSAK (69 aa)) constitute an S1 motif domain.

The protein belongs to the polyribonucleotide nucleotidyltransferase family. Mg(2+) serves as cofactor.

Its subcellular location is the cytoplasm. It carries out the reaction RNA(n+1) + phosphate = RNA(n) + a ribonucleoside 5'-diphosphate. In terms of biological role, involved in mRNA degradation. Catalyzes the phosphorolysis of single-stranded polyribonucleotides processively in the 3'- to 5'-direction. The polypeptide is Polyribonucleotide nucleotidyltransferase (Burkholderia lata (strain ATCC 17760 / DSM 23089 / LMG 22485 / NCIMB 9086 / R18194 / 383)).